The following is a 270-amino-acid chain: Eukaryotic translation initiation factor 3 subunit G-1 (270 aa).

One can recognise an RRM domain in the interval 189–267 (AAIRISNLSE…LILSVEWSKP (79 aa)).

It belongs to the eIF-3 subunit G family. In terms of assembly, component of the eukaryotic translation initiation factor 3 (eIF-3) complex. The eIF-3 complex interacts with pix.

The protein localises to the cytoplasm. Functionally, RNA-binding component of the eukaryotic translation initiation factor 3 (eIF-3) complex, which is involved in protein synthesis of a specialized repertoire of mRNAs and, together with other initiation factors, stimulates binding of mRNA and methionyl-tRNAi to the 40S ribosome. The eIF-3 complex specifically targets and initiates translation of a subset of mRNAs involved in cell proliferation. This subunit can bind 18S rRNA. This is Eukaryotic translation initiation factor 3 subunit G-1 from Drosophila ananassae (Fruit fly).